Here is an 88-residue protein sequence, read N- to C-terminus: UPF0223 protein BH2638 (88 aa).

The protein belongs to the UPF0223 family.

This chain is UPF0223 protein BH2638, found in Halalkalibacterium halodurans (strain ATCC BAA-125 / DSM 18197 / FERM 7344 / JCM 9153 / C-125) (Bacillus halodurans).